A 307-amino-acid polypeptide reads, in one-letter code: Pseudouridine-5'-phosphate glycosidase (307 aa).

The active-site Proton donor is glutamate 26. Positions 88 and 108 each coordinate substrate. Aspartate 140 contributes to the Mn(2+) binding site. Substrate is bound at residue serine 142–aspartate 144. Lysine 161 acts as the Nucleophile in catalysis.

It belongs to the pseudouridine-5'-phosphate glycosidase family. As to quaternary structure, homotrimer. Mn(2+) is required as a cofactor.

The catalysed reaction is D-ribose 5-phosphate + uracil = psi-UMP + H2O. Catalyzes the reversible cleavage of pseudouridine 5'-phosphate (PsiMP) to ribose 5-phosphate and uracil. Functions biologically in the cleavage direction, as part of a pseudouridine degradation pathway. The polypeptide is Pseudouridine-5'-phosphate glycosidase (Clostridium botulinum (strain Langeland / NCTC 10281 / Type F)).